We begin with the raw amino-acid sequence, 308 residues long: UDP-N-acetylenolpyruvoylglucosamine reductase (308 aa).

An FAD-binding PCMH-type domain is found at Arg24–Gly187. Residue Arg167 is part of the active site. The segment at Gln199–Ala230 is disordered. Basic and acidic residues predominate over residues Leu200–Ser213. The span at Ala214 to Gly228 shows a compositional bias: polar residues. Ser216 (proton donor) is an active-site residue. Glu298 is a catalytic residue.

This sequence belongs to the MurB family. FAD is required as a cofactor.

It localises to the cytoplasm. It carries out the reaction UDP-N-acetyl-alpha-D-muramate + NADP(+) = UDP-N-acetyl-3-O-(1-carboxyvinyl)-alpha-D-glucosamine + NADPH + H(+). It functions in the pathway cell wall biogenesis; peptidoglycan biosynthesis. Functionally, cell wall formation. This is UDP-N-acetylenolpyruvoylglucosamine reductase from Ruegeria pomeroyi (strain ATCC 700808 / DSM 15171 / DSS-3) (Silicibacter pomeroyi).